The primary structure comprises 361 residues: DNA replication and repair protein RecF (361 aa).

An ATP-binding site is contributed by 30 to 37; that stretch reads GQNAQGKT.

This sequence belongs to the RecF family.

The protein resides in the cytoplasm. Its function is as follows. The RecF protein is involved in DNA metabolism; it is required for DNA replication and normal SOS inducibility. RecF binds preferentially to single-stranded, linear DNA. It also seems to bind ATP. The chain is DNA replication and repair protein RecF from Streptococcus gordonii (strain Challis / ATCC 35105 / BCRC 15272 / CH1 / DL1 / V288).